The chain runs to 161 residues: RNA pyrophosphohydrolase (161 aa).

In terms of domain architecture, Nudix hydrolase spans 12-154 (PYRPGVGMMI…KRKLYQAVVK (143 aa)). The Nudix box signature appears at 46–67 (GGIVPGETPSIAAMREMLEEIG).

This sequence belongs to the Nudix hydrolase family. RppH subfamily. It depends on a divalent metal cation as a cofactor.

Functionally, accelerates the degradation of transcripts by removing pyrophosphate from the 5'-end of triphosphorylated RNA, leading to a more labile monophosphorylated state that can stimulate subsequent ribonuclease cleavage. The polypeptide is RNA pyrophosphohydrolase (Rickettsia peacockii (strain Rustic)).